We begin with the raw amino-acid sequence, 294 residues long: Phosphatidylserine decarboxylase proenzyme (294 aa).

Active-site charge relay system; for autoendoproteolytic cleavage activity residues include aspartate 100, histidine 157, and serine 261. Serine 261 serves as the catalytic Schiff-base intermediate with substrate; via pyruvic acid; for decarboxylase activity. Serine 261 is modified (pyruvic acid (Ser); by autocatalysis).

Belongs to the phosphatidylserine decarboxylase family. PSD-B subfamily. Prokaryotic type I sub-subfamily. In terms of assembly, heterodimer of a large membrane-associated beta subunit and a small pyruvoyl-containing alpha subunit. Requires pyruvate as cofactor. Is synthesized initially as an inactive proenzyme. Formation of the active enzyme involves a self-maturation process in which the active site pyruvoyl group is generated from an internal serine residue via an autocatalytic post-translational modification. Two non-identical subunits are generated from the proenzyme in this reaction, and the pyruvate is formed at the N-terminus of the alpha chain, which is derived from the carboxyl end of the proenzyme. The autoendoproteolytic cleavage occurs by a canonical serine protease mechanism, in which the side chain hydroxyl group of the serine supplies its oxygen atom to form the C-terminus of the beta chain, while the remainder of the serine residue undergoes an oxidative deamination to produce ammonia and the pyruvoyl prosthetic group on the alpha chain. During this reaction, the Ser that is part of the protease active site of the proenzyme becomes the pyruvoyl prosthetic group, which constitutes an essential element of the active site of the mature decarboxylase.

The protein resides in the cell membrane. The catalysed reaction is a 1,2-diacyl-sn-glycero-3-phospho-L-serine + H(+) = a 1,2-diacyl-sn-glycero-3-phosphoethanolamine + CO2. It functions in the pathway phospholipid metabolism; phosphatidylethanolamine biosynthesis; phosphatidylethanolamine from CDP-diacylglycerol: step 2/2. Catalyzes the formation of phosphatidylethanolamine (PtdEtn) from phosphatidylserine (PtdSer). In Histophilus somni (strain 129Pt) (Haemophilus somnus), this protein is Phosphatidylserine decarboxylase proenzyme.